The chain runs to 144 residues: Peptide methionine sulfoxide reductase MsrB (144 aa).

Positions 1-12 are enriched in basic and acidic residues; the sequence is MDKQQGELRQRL. The disordered stretch occupies residues 1–25; that stretch reads MDKQQGELRQRLTPEQYAVTQEAAT. The 124-residue stretch at 5–128 folds into the MsrB domain; it reads QGELRQRLTP…NSAALKFIPV (124 aa). The active-site Nucleophile is cysteine 117.

This sequence belongs to the MsrB Met sulfoxide reductase family.

The enzyme catalyses L-methionyl-[protein] + [thioredoxin]-disulfide + H2O = L-methionyl-(R)-S-oxide-[protein] + [thioredoxin]-dithiol. The polypeptide is Peptide methionine sulfoxide reductase MsrB (Lactiplantibacillus plantarum (strain ATCC BAA-793 / NCIMB 8826 / WCFS1) (Lactobacillus plantarum)).